A 335-amino-acid chain; its full sequence is GTPase Obg (335 aa).

The Obg domain maps to 1-158 (MFLDQITIEL…RQVELELKLI (158 aa)). An OBG-type G domain is found at 159 to 334 (ADIGLVGFPN…LNSLFTNKLA (176 aa)). GTP contacts are provided by residues 165-172 (GFPNAGKS), 190-194 (FTTLQ), 215-218 (DIPG), 285-288 (NKID), and 315-317 (SGL). Positions 172 and 192 each coordinate Mg(2+).

This sequence belongs to the TRAFAC class OBG-HflX-like GTPase superfamily. OBG GTPase family. Monomer. It depends on Mg(2+) as a cofactor.

The protein resides in the cytoplasm. Functionally, an essential GTPase (4.1 pmol GTP/min). Cannot substitute endogenous obg in E.coli, has a partially dominant-negative phenotype upon overexpression in liquid culture leading to decreased growth rate in a concentration-dependent fashion, with 50% of cells being elongated. Binds GTP, GDP and possibly (p)ppGpp with moderate affinity, with high nucleotide exchange rates and a fairly low GTP hydrolysis rate. It may play a role in control of the cell cycle, stress response, ribosome biogenesis and in those bacteria that undergo differentiation, in morphogenesis control. In Chlamydia abortus (strain DSM 27085 / S26/3) (Chlamydophila abortus), this protein is GTPase Obg.